The chain runs to 520 residues: Succinyl-CoA:3-ketoacid coenzyme A transferase 2A, mitochondrial (520 aa).

The N-terminal 39 residues, 1–39, are a transit peptide targeting the mitochondrion; that stretch reads MAALRLLAWAFSRRVSAHRPQPTLPHHLIRHYPTTRCGK. Residues 280-299 are disordered; the sequence is ERLTTRDSPPAPGSKDQDPK. The active-site 5-glutamyl coenzyme A thioester intermediate is E342.

It belongs to the 3-oxoacid CoA-transferase family. Homodimer. As to expression, expressed in flagella of epididymal sperm.

It localises to the mitochondrion. It catalyses the reaction a 3-oxo acid + succinyl-CoA = a 3-oxoacyl-CoA + succinate. It participates in ketone metabolism; succinyl-CoA degradation; acetoacetyl-CoA from succinyl-CoA: step 1/1. In terms of biological role, key enzyme for ketone body catabolism. Transfers the CoA moiety from succinate to acetoacetate. Formation of the enzyme-CoA intermediate proceeds via an unstable anhydride species formed between the carboxylate groups of the enzyme and substrate. Probably play and important roles in the energy metabolism of spermatozoa. The chain is Succinyl-CoA:3-ketoacid coenzyme A transferase 2A, mitochondrial (Oxct2a) from Rattus norvegicus (Rat).